The chain runs to 492 residues: Cell division protein FtsA (492 aa).

Disordered stretches follow at residues 288 to 307 and 429 to 458; these read GEETPSQNVQIPTTGSDGHE and YTRTAHQSSPTPHIHSSPTERNLSDLKAPS. A compositionally biased stretch (polar residues) spans 291–303; sequence TPSQNVQIPTTGS. The segment covering 436–447 has biased composition (low complexity); the sequence is SSPTPHIHSSPT.

The protein belongs to the FtsA/MreB family. Self-interacts. Interacts with FtsZ.

The protein localises to the cell inner membrane. Its function is as follows. Cell division protein that is involved in the assembly of the Z ring. May serve as a membrane anchor for the Z ring. The sequence is that of Cell division protein FtsA from Helicobacter pylori (strain ATCC 700392 / 26695) (Campylobacter pylori).